Reading from the N-terminus, the 381-residue chain is Glycerate kinase (381 aa).

Belongs to the glycerate kinase type-1 family.

The catalysed reaction is (R)-glycerate + ATP = (2R)-3-phosphoglycerate + ADP + H(+). In Bacillus cereus (strain ATCC 10987 / NRS 248), this protein is Glycerate kinase (glxK).